We begin with the raw amino-acid sequence, 303 residues long: Hemolysin E (303 aa).

Cysteine 87 and cysteine 285 are oxidised to a cystine. A helical membrane pass occupies residues alanine 183 to valine 203.

Belongs to the hemolysin E family. In terms of assembly, monomer and oligomer. In periplasm, it is present as a monomer, while in outer membrane vesicles, it oligomerizes to form a pore structure that is active. The pore is formed by a dodecamer. In terms of processing, in periplasm, it forms a disulfide bond, which prevents the oligomerization. In outer membrane vesicles, the redox status prevents formation of the disulfide bond, leading to oligomerization and pore formation.

It localises to the secreted. The protein resides in the periplasm. Its subcellular location is the host cell membrane. In terms of biological role, toxin, which has some hemolytic activity towards mammalian cells. Acts by forming a pore-like structure upon contact with mammalian cells. The chain is Hemolysin E (hlyE) from Escherichia coli O157:H7.